Here is a 175-residue protein sequence, read N- to C-terminus: Peptide deformylase (175 aa).

2 residues coordinate Fe cation: C96 and H138. E139 is an active-site residue. H142 is a binding site for Fe cation.

This sequence belongs to the polypeptide deformylase family. Fe(2+) serves as cofactor.

It catalyses the reaction N-terminal N-formyl-L-methionyl-[peptide] + H2O = N-terminal L-methionyl-[peptide] + formate. Functionally, removes the formyl group from the N-terminal Met of newly synthesized proteins. Requires at least a dipeptide for an efficient rate of reaction. N-terminal L-methionine is a prerequisite for activity but the enzyme has broad specificity at other positions. This Rhodopseudomonas palustris (strain BisB5) protein is Peptide deformylase.